The chain runs to 45 residues: Photosystem II reaction center protein K (45 aa).

The propeptide occupies 1–8 (MNSALFLA). Residues 23–43 (ILPVIPVFFLLLAFVWQAAIG) form a helical membrane-spanning segment.

This sequence belongs to the PsbK family. In terms of assembly, PSII is composed of 1 copy each of membrane proteins PsbA, PsbB, PsbC, PsbD, PsbE, PsbF, PsbH, PsbI, PsbJ, PsbK, PsbL, PsbM, PsbT, PsbX, PsbY, PsbZ, Psb30/Ycf12, at least 3 peripheral proteins of the oxygen-evolving complex and a large number of cofactors. It forms dimeric complexes.

It is found in the plastid. It localises to the chloroplast thylakoid membrane. In terms of biological role, one of the components of the core complex of photosystem II (PSII). PSII is a light-driven water:plastoquinone oxidoreductase that uses light energy to abstract electrons from H(2)O, generating O(2) and a proton gradient subsequently used for ATP formation. It consists of a core antenna complex that captures photons, and an electron transfer chain that converts photonic excitation into a charge separation. The chain is Photosystem II reaction center protein K from Pyropia yezoensis (Susabi-nori).